A 247-amino-acid chain; its full sequence is E3 ubiquitin-protein ligase RNF182 (247 aa).

The RING-type zinc-finger motif lies at 20 to 68 (CKICYNRYNLKQRKPKVLECCHRVCAKCLYKIIDFGDSPQGVIVCPFCR). 2 helical membrane passes run 184–204 (VLVW…IYLL) and 211–231 (LGVV…VYGF).

Interacts with ATP6V0C.

The protein resides in the membrane. Its subcellular location is the cytoplasm. The catalysed reaction is S-ubiquitinyl-[E2 ubiquitin-conjugating enzyme]-L-cysteine + [acceptor protein]-L-lysine = [E2 ubiquitin-conjugating enzyme]-L-cysteine + N(6)-ubiquitinyl-[acceptor protein]-L-lysine.. The protein operates within protein modification; protein ubiquitination. In terms of biological role, E3 ubiquitin-protein ligase that mediates the ubiquitination of ATP6V0C and targets it to degradation via the ubiquitin-proteasome pathway. Also plays a role in the inhibition of TLR-triggered innate immune response by mediating 'Lys'-48-linked ubiquitination and subsequent degradation of NF-kappa-B component RELA. The sequence is that of E3 ubiquitin-protein ligase RNF182 (Rnf182) from Rattus norvegicus (Rat).